A 141-amino-acid chain; its full sequence is Hemoglobin subunit alpha-1/2 (141 aa).

A Globin domain is found at 1–141 (VLSPADKANV…VGTVLTSKYR (141 aa)). The residue at position 3 (S3) is a Phosphoserine. 2 positions are modified to N6-succinyllysine: K7 and K11. Residue K16 is modified to N6-acetyllysine; alternate. Position 16 is an N6-succinyllysine; alternate (K16). Y24 is subject to Phosphotyrosine. Position 35 is a phosphoserine (S35). An N6-succinyllysine modification is found at K40. The residue at position 49 (S49) is a Phosphoserine. H58 provides a ligand contact to O2. A heme b-binding site is contributed by H87. A Phosphoserine modification is found at S102. T108 is subject to Phosphothreonine. 2 positions are modified to phosphoserine: S124 and S131. A phosphothreonine mark is found at T134 and T137. S138 carries the phosphoserine modification.

Belongs to the globin family. As to quaternary structure, heterotetramer of two alpha chains and two beta chains. As to expression, red blood cells.

In terms of biological role, involved in oxygen transport from the lung to the various peripheral tissues. The chain is Hemoglobin subunit alpha-1/2 from Macroderma gigas (Australian ghost bat).